A 134-amino-acid chain; its full sequence is Profilin (134 aa).

This sequence belongs to the profilin family. In terms of assembly, occurs in many kinds of cells as a complex with monomeric actin in a 1:1 ratio.

The protein resides in the cytoplasm. Its subcellular location is the cytoskeleton. Binds to actin and affects the structure of the cytoskeleton. At high concentrations, profilin prevents the polymerization of actin, whereas it enhances it at low concentrations. By binding to PIP2, it inhibits the formation of IP3 and DG. The sequence is that of Profilin from Brassica napus (Rape).